The sequence spans 877 residues: Protein P (877 aa).

The tract at residues 1–183 (MHPFSQLFRN…GKPYSWGHRQ (183 aa)) is terminal protein domain (TP). Residues 184–382 (LEQHNGQQHE…YCLHHIVSSL (199 aa)) are spacer. Over residues 185–198 (EQHNGQQHESHLQS) the composition is skewed to basic and acidic residues. The interval 185 to 347 (EQHNGQQHES…PSSSGLCGGT (163 aa)) is disordered. A compositionally biased stretch (polar residues) spans 233–242 (FGESQKSART). The segment covering 267–281 (QQGSSQVSSPRSKSS) has biased composition (low complexity). Polar residues-rich tracts occupy residues 282–302 (NFRN…PTWY) and 338–347 (PSSSGLCGGT). A polymerase/reverse transcriptase domain (RT) region spans residues 383 to 723 (EDWGPCTISG…YAELWPVARQ (341 aa)). Positions 393–634 (DVTIRSPRTP…HHLHFMGYVI (242 aa)) constitute a Reverse transcriptase domain. Positions 465, 585, and 586 each coordinate Mg(2+).

The protein belongs to the hepadnaviridae P protein family.

The catalysed reaction is DNA(n) + a 2'-deoxyribonucleoside 5'-triphosphate = DNA(n+1) + diphosphate. The enzyme catalyses Endonucleolytic cleavage to 5'-phosphomonoester.. With respect to regulation, activated by host HSP70 and HSP40 in vitro to be able to bind the epsilon loop of the pgRNA. Because deletion of the RNase H region renders the protein partly chaperone-independent, the chaperones may be needed indirectly to relieve occlusion of the RNA-binding site by this domain. Inhibited by several reverse-transcriptase inhibitors: Lamivudine, Adefovir and Entecavir. Its function is as follows. Multifunctional enzyme that converts the viral RNA genome into dsDNA in viral cytoplasmic capsids. This enzyme displays a DNA polymerase activity that can copy either DNA or RNA templates, and a ribonuclease H (RNase H) activity that cleaves the RNA strand of RNA-DNA heteroduplexes in a partially processive 3'- to 5'-endonucleasic mode. Neo-synthesized pregenomic RNA (pgRNA) are encapsidated together with the P protein, and reverse-transcribed inside the nucleocapsid. Initiation of reverse-transcription occurs first by binding the epsilon loop on the pgRNA genome, and is initiated by protein priming, thereby the 5'-end of (-)DNA is covalently linked to P protein. Partial (+)DNA is synthesized from the (-)DNA template and generates the relaxed circular DNA (RC-DNA) genome. After budding and infection, the RC-DNA migrates in the nucleus, and is converted into a plasmid-like covalently closed circular DNA (cccDNA). The activity of P protein does not seem to be necessary for cccDNA generation, and is presumably released from (+)DNA by host nuclear DNA repair machinery. The sequence is that of Protein P from Arctic squirrel hepatitis virus (ASHV).